The primary structure comprises 291 residues: 4-hydroxy-tetrahydrodipicolinate synthase (291 aa).

T44 provides a ligand contact to pyruvate. Y132 serves as the catalytic Proton donor/acceptor. K160 acts as the Schiff-base intermediate with substrate in catalysis. I202 lines the pyruvate pocket.

It belongs to the DapA family. As to quaternary structure, homotetramer; dimer of dimers.

It is found in the cytoplasm. The catalysed reaction is L-aspartate 4-semialdehyde + pyruvate = (2S,4S)-4-hydroxy-2,3,4,5-tetrahydrodipicolinate + H2O + H(+). It participates in amino-acid biosynthesis; L-lysine biosynthesis via DAP pathway; (S)-tetrahydrodipicolinate from L-aspartate: step 3/4. Catalyzes the condensation of (S)-aspartate-beta-semialdehyde [(S)-ASA] and pyruvate to 4-hydroxy-tetrahydrodipicolinate (HTPA). This Roseobacter denitrificans (strain ATCC 33942 / OCh 114) (Erythrobacter sp. (strain OCh 114)) protein is 4-hydroxy-tetrahydrodipicolinate synthase.